A 231-amino-acid polypeptide reads, in one-letter code: Ribonuclease 3 (231 aa).

The RNase III domain maps to 7–135 (IQAIESKLNF…ILGAVYLDGG (129 aa)). E48 contributes to the Mg(2+) binding site. D52 is a catalytic residue. The Mg(2+) site is built by N121 and E124. The active site involves E124. Residues 160 to 229 (NPKNRLQQFT…AKQALSTHDN (70 aa)) form the DRBM domain.

Belongs to the ribonuclease III family. As to quaternary structure, homodimer. Mg(2+) serves as cofactor.

The protein resides in the cytoplasm. The catalysed reaction is Endonucleolytic cleavage to 5'-phosphomonoester.. Its function is as follows. Digests double-stranded RNA. Involved in the processing of primary rRNA transcript to yield the immediate precursors to the large and small rRNAs (23S and 16S). Processes some mRNAs, and tRNAs when they are encoded in the rRNA operon. Processes pre-crRNA and tracrRNA of type II CRISPR loci if present in the organism. This chain is Ribonuclease 3, found in Chlamydia trachomatis serovar L2 (strain ATCC VR-902B / DSM 19102 / 434/Bu).